Here is a 484-residue protein sequence, read N- to C-terminus: Glutamate--tRNA ligase (484 aa).

Residues 10 to 20 (PSPTGYLHVGG) carry the 'HIGH' region motif. The 'KMSKS' region signature appears at 252-256 (KLSKR). K255 provides a ligand contact to ATP.

This sequence belongs to the class-I aminoacyl-tRNA synthetase family. Glutamate--tRNA ligase type 1 subfamily. In terms of assembly, monomer.

The protein resides in the cytoplasm. The enzyme catalyses tRNA(Glu) + L-glutamate + ATP = L-glutamyl-tRNA(Glu) + AMP + diphosphate. Catalyzes the attachment of glutamate to tRNA(Glu) in a two-step reaction: glutamate is first activated by ATP to form Glu-AMP and then transferred to the acceptor end of tRNA(Glu). The sequence is that of Glutamate--tRNA ligase from Mycoplasma genitalium (strain ATCC 33530 / DSM 19775 / NCTC 10195 / G37) (Mycoplasmoides genitalium).